A 396-amino-acid polypeptide reads, in one-letter code: Inositol polyphosphate multikinase (396 aa).

Low complexity predominate over residues 1 to 13 (MAAEPPALRLRPP). Residues 1–22 (MAAEPPALRLRPPGSTGDSPPV) form a disordered region. Ala2 carries the N-acetylalanine modification. Ser19 is modified (phosphoserine). Lys58 lines the ATP pocket. Arg65 is a substrate binding site. Residues 114–116 (EDV) and Asp127 contribute to the ATP site. Residues Lys129, 143 to 150 (KIQQQVSK), and Gln179 each bind substrate. Residues 300–310 (RHRKLYAKKHQ) carry the Nuclear localization signal motif. Asp365 lines the ATP pocket.

It belongs to the inositol phosphokinase (IPK) family. The cofactor is Mg(2+).

The protein localises to the nucleus. It catalyses the reaction 1D-myo-inositol 1,4,5-trisphosphate + 2 ATP = 1D-myo-inositol 1,3,4,5,6-pentakisphosphate + 2 ADP + 2 H(+). It carries out the reaction 1D-myo-inositol 1,3,4,6-tetrakisphosphate + ATP = 1D-myo-inositol 1,3,4,5,6-pentakisphosphate + ADP + H(+). The catalysed reaction is 1-octadecanoyl-2-(5Z,8Z,11Z,14Z)-eicosatetraenoyl-sn-glycero-3-phospho-1D-myo-inositol 4,5-bisphosphate + ATP = 1-octadecanoyl-2-(5Z,8Z,11Z,14Z-eicosatetraenoyl)-sn-glycero-3-phospho-(1D-myo-inositol 3,4,5-triphosphate) + ADP + H(+). The enzyme catalyses a 1,2-diacyl-sn-glycero-3-phospho-(1D-myo-inositol-4,5-bisphosphate) + ATP = a 1,2-diacyl-sn-glycero-3-phospho-(1D-myo-inositol-3,4,5-trisphosphate) + ADP + H(+). It catalyses the reaction 1D-myo-inositol 1,4,5,6-tetrakisphosphate + ATP = 1D-myo-inositol 1,3,4,5,6-pentakisphosphate + ADP + H(+). The protein operates within phospholipid metabolism; phosphatidylinositol metabolism. Inositol phosphate kinase with a broad substrate specificity. Phosphorylates inositol 1,4,5-trisphosphate (Ins(1,4,5)P3) first to inositol 1,3,4,5-tetrakisphosphate and then to inositol 1,3,4,5,6-pentakisphosphate (Ins(1,3,4,5,6)P5). Phosphorylates inositol 1,3,4,6-tetrakisphosphate (Ins(1,3,4,6)P4). Phosphorylates inositol 1,4,5,6-tetrakisphosphate (Ins(1,4,5,6)P4). Phosphorylates glycero-3-phospho-1D-myo-inositol 4,5-bisphosphate to glycero-3-phospho-1D-myo-inositol 3,4,5-trisphosphate. Plays an important role in MLKL-mediated necroptosis via its role in the biosynthesis of inositol pentakisphosphate (InsP5) and inositol hexakisphosphate (InsP6). Binding of these highly phosphorylated inositol phosphates to MLKL mediates the release of an N-terminal auto-inhibitory region, leading to activation of the kinase. Essential for activated phospho-MLKL to oligomerize and localize to the cell membrane during necroptosis. Required for normal embryonic development, probably via its role in the biosynthesis of inositol 1,3,4,5,6-pentakisphosphate (Ins(1,3,4,5,6)P5) and inositol hexakisphosphate (InsP6). The protein is Inositol polyphosphate multikinase (Ipmk) of Mus musculus (Mouse).